Reading from the N-terminus, the 209-residue chain is Kynurenine formamidase (209 aa).

Phe18 lines the substrate pocket. Zn(2+) contacts are provided by His48, His52, and Asp54. His58 acts as the Proton donor/acceptor in catalysis. Zn(2+) is bound by residues His160 and Glu172.

It belongs to the Cyclase 1 superfamily. KynB family. In terms of assembly, homodimer. Zn(2+) is required as a cofactor.

It carries out the reaction N-formyl-L-kynurenine + H2O = L-kynurenine + formate + H(+). Its pathway is amino-acid degradation; L-tryptophan degradation via kynurenine pathway; L-kynurenine from L-tryptophan: step 2/2. Catalyzes the hydrolysis of N-formyl-L-kynurenine to L-kynurenine, the second step in the kynurenine pathway of tryptophan degradation. This chain is Kynurenine formamidase, found in Bordetella petrii (strain ATCC BAA-461 / DSM 12804 / CCUG 43448).